Here is a 238-residue protein sequence, read N- to C-terminus: Dolichyldiphosphatase 1 (238 aa).

A run of 4 helical transmembrane segments spans residues 33–53 (LAYLSLGPVFVIVGFVTLIIF), 100–120 (PSSHSQFMWFFSVYSFLFLYL), 130–150 (FLDLLWRHVLSLGLLAAAFLV), and 162–182 (WSQVLYGGIAGGLMAVAWFIF).

This sequence belongs to the dolichyldiphosphatase family.

It localises to the endoplasmic reticulum membrane. It carries out the reaction a di-trans,poly-cis-dolichyl diphosphate + H2O = a di-trans,poly-cis-dolichyl phosphate + phosphate + H(+). Its pathway is protein modification; protein glycosylation. Required for efficient N-glycosylation. Necessary for maintaining optimal levels of dolichol-linked oligosaccharides. Hydrolyzes dolichyl pyrophosphate at a very high rate and dolichyl monophosphate at a much lower rate. Does not act on phosphatidate. The polypeptide is Dolichyldiphosphatase 1 (DOLPP1) (Plecturocebus moloch (Dusky titi monkey)).